The sequence spans 1862 residues: Protein RRP5 homolog (1862 aa).

The disordered stretch occupies residues 1–56; it reads MANLEESFPRGGTRKLHKSEKSSQQVVEQDNLFDVSTEEGPIKRKKSQKGPAKTKK. The residue at position 2 (Ala-2) is an N-acetylalanine. Ser-7 is subject to Phosphoserine. Residues 43-56 show a composition bias toward basic residues; sequence KRKKSQKGPAKTKK. S1 motif domains follow at residues 83–171, 187–258, 281–346, and 365–436; these read GMRI…LSVN, GMLL…LSVE, GLLV…LSLR, and GAVL…LSLR. At Ser-438 the chain carries Phosphoserine. 5 consecutive S1 motif domains span residues 453 to 522, 542 to 611, 636 to 707, 729 to 798, and 846 to 911; these read GTVV…MTLK, GLQT…LSFR, GQLV…LCRK, GMLL…LSLR, and GMVL…VSLH. Residues 999–1036 are disordered; it reads SKRTRMPVQRDSETVDDKGEEKEEEEEEEEKEEENLTV. A compositionally biased stretch (basic and acidic residues) spans 1006–1019; the sequence is VQRDSETVDDKGEE. The span at 1020-1033 shows a compositional bias: acidic residues; the sequence is KEEEEEEEEKEEEN. S1 motif domains are found at residues 1047 to 1120, 1160 to 1233, 1241 to 1309, and 1335 to 1407; these read GDKV…ISHP, GQTV…LSLI, GEVA…LSLR, and GQLL…LSLL. Disordered regions lie at residues 1406–1520 and 1545–1577; these read LLPS…STEV and REES…KAEK. Composition is skewed to basic and acidic residues over residues 1423-1437 and 1445-1454; these read PKQE…EGQK and RREEKEEPQK. A Glycyl lysine isopeptide (Lys-Gly) (interchain with G-Cter in SUMO2) cross-link involves residue Lys-1424. Phosphoserine occurs at positions 1468 and 1490. Over residues 1566–1577 the composition is skewed to basic and acidic residues; the sequence is KERELEKQKAEK. HAT repeat units follow at residues 1590–1622, 1696–1728, 1766–1798, and 1800–1835; these read GRQP…FHLQ, EKYK…FVLG, GDVE…MTIK, and GSQT…YEKQ.

As to quaternary structure, interacts with NF-kappa-B p50/NFKB1 and NF-kappa-B p65/RELA. As to expression, ubiquitous.

The protein localises to the nucleus. It localises to the nucleolus. Functionally, essential for the generation of mature 18S rRNA, specifically necessary for cleavages at sites A0, 1 and 2 of the 47S precursor. Directly interacts with U3 snoRNA. The protein is Protein RRP5 homolog (Pdcd11) of Mus musculus (Mouse).